Reading from the N-terminus, the 559-residue chain is U-box domain-containing protein 41 (559 aa).

Disordered stretches follow at residues 1 to 30 and 121 to 156; these read MGGN…KHDE and RMDK…SPSD. The span at 12-24 shows a compositional bias: polar residues; it reads HQRSSSATTTTLP. One can recognise a U-box domain in the interval 30–104; that stretch reads ETPPEFLCPI…FSWCDRQKVD (75 aa). ARM repeat units follow at residues 266–305, 307–346, 348–388, 390–427, and 428–472; these read EDLR…NLSL, KQNK…SLAL, DENK…HLSL, PSNR…NLAA, and CPDG…TLCQ.

It catalyses the reaction S-ubiquitinyl-[E2 ubiquitin-conjugating enzyme]-L-cysteine + [acceptor protein]-L-lysine = [E2 ubiquitin-conjugating enzyme]-L-cysteine + N(6)-ubiquitinyl-[acceptor protein]-L-lysine.. It participates in protein modification; protein ubiquitination. Functionally, functions as an E3 ubiquitin ligase. The polypeptide is U-box domain-containing protein 41 (PUB41) (Arabidopsis thaliana (Mouse-ear cress)).